A 473-amino-acid chain; its full sequence is Photosystem II CP43 reaction center protein (473 aa).

Positions 1–14 (MKTLYSLRRFYHVE) are excised as a propeptide. The residue at position 15 (threonine 15) is an N-acetylthreonine. Threonine 15 carries the post-translational modification Phosphothreonine. 5 helical membrane passes run 69–93 (LFEV…PHLA), 134–155 (LLGP…KDRN), 178–200 (KALY…RKIT), 255–275 (KPFA…LSYS), and 291–312 (WFNN…ASQA). Glutamate 367 serves as a coordination point for [CaMn4O5] cluster. Residues 447–471 (RARAAAAGFEKGIDRDFEPVLSMTP) traverse the membrane as a helical segment.

Belongs to the PsbB/PsbC family. PsbC subfamily. As to quaternary structure, PSII is composed of 1 copy each of membrane proteins PsbA, PsbB, PsbC, PsbD, PsbE, PsbF, PsbH, PsbI, PsbJ, PsbK, PsbL, PsbM, PsbT, PsbX, PsbY, PsbZ, Psb30/Ycf12, at least 3 peripheral proteins of the oxygen-evolving complex and a large number of cofactors. It forms dimeric complexes. Requires Binds multiple chlorophylls and provides some of the ligands for the Ca-4Mn-5O cluster of the oxygen-evolving complex. It may also provide a ligand for a Cl- that is required for oxygen evolution. PSII binds additional chlorophylls, carotenoids and specific lipids. as cofactor.

Its subcellular location is the plastid. The protein localises to the chloroplast thylakoid membrane. In terms of biological role, one of the components of the core complex of photosystem II (PSII). It binds chlorophyll and helps catalyze the primary light-induced photochemical processes of PSII. PSII is a light-driven water:plastoquinone oxidoreductase, using light energy to abstract electrons from H(2)O, generating O(2) and a proton gradient subsequently used for ATP formation. This is Photosystem II CP43 reaction center protein from Draba nemorosa (Woodland whitlowgrass).